A 414-amino-acid chain; its full sequence is Putative F-box/kelch-repeat protein At2g29800 (414 aa).

Residues 1–61 (MASISETSDD…EVENVPPIPR (61 aa)) are disordered. The span at 20–35 (KPEEPHKNPQEEKENQ) shows a compositional bias: basic and acidic residues. The span at 40 to 54 (NEADEEDDHQDEEVE) shows a compositional bias: acidic residues. An F-box domain is found at 58–105 (PIPRKIPPVLIENTIAPLRRCHYPKLSLLSNAFRQVISSEDLFQVRSL). Kelch repeat units lie at residues 163 to 211 (KIYV…VIDG), 212 to 258 (RIYV…IVHV), 263 to 302 (KIYI…SCVV), and 305 to 349 (LLYA…SKMA).

This chain is Putative F-box/kelch-repeat protein At2g29800, found in Arabidopsis thaliana (Mouse-ear cress).